The sequence spans 318 residues: Myoblast determination protein 1 (318 aa).

Met1 participates in a covalent cross-link: Peptide (Met-Gly) (interchain with G-Cter in ubiquitin). Residue Lys104 is modified to N6-methyllysine; by EHMT2. In terms of domain architecture, bHLH spans 109–160 (DRRKAATMRERRRLSKVNEAFETLKRCTSSNPNQRLPKVEILRNAIRYIEGL). Disordered regions lie at residues 175–225 (AAFY…QNGY) and 265–318 (APAL…YQVL). A compositionally biased stretch (polar residues) spans 196–206 (SDASSPRSNCS). The segment covering 265–274 (APALLLADAP) has biased composition (low complexity). Composition is skewed to polar residues over residues 287–298 (LSDTEQGTQTPS) and 307–318 (AGSNPNAIYQVL).

As to quaternary structure, interacts with SUV39H1. Efficient DNA binding requires dimerization with another bHLH protein. Seems to form active heterodimers with ITF-2. Interacts with DDX5. Interacts with CHD2. Interacts with TSC22D3 isoform 1 and isoform 4. Interacts with SETD3. Interacts with P-TEFB complex; promotes the transcriptional activity of MYOD1 through its CDK9-mediated phosphorylation. Interacts with CSRP3. Interacts with NUPR1. In terms of processing, acetylated by a complex containing EP300 and PCAF. The acetylation is essential to activate target genes. Conversely, its deacetylation by SIRT1 inhibits its function. Ubiquitinated on the N-terminus; which is required for proteasomal degradation. Post-translationally, phosphorylated by CDK9. This phosphorylation promotes its function in muscle differentiation. In terms of processing, methylation at Lys-104 by EHMT2/G9a inhibits myogenic activity.

Its subcellular location is the nucleus. In terms of biological role, acts as a transcriptional activator that promotes transcription of muscle-specific target genes and plays a role in muscle differentiation. Together with MYF5 and MYOG, co-occupies muscle-specific gene promoter core region during myogenesis. Induces fibroblasts to differentiate into myoblasts. Interacts with and is inhibited by the twist protein. This interaction probably involves the basic domains of both proteins. The polypeptide is Myoblast determination protein 1 (Myod1) (Mus musculus (Mouse)).